We begin with the raw amino-acid sequence, 614 residues long: Phosphomethylpyrimidine synthase (614 aa).

Substrate is bound by residues Asn226, Met255, Tyr284, His320, 340–342, 381–384, and Glu420; these read SRG and DGLR. His424 is a binding site for Zn(2+). Substrate is bound at residue Tyr447. His488 is a binding site for Zn(2+). Residues Cys568, Cys571, and Cys576 each contribute to the [4Fe-4S] cluster site.

The protein belongs to the ThiC family. In terms of assembly, homodimer. [4Fe-4S] cluster serves as cofactor.

The enzyme catalyses 5-amino-1-(5-phospho-beta-D-ribosyl)imidazole + S-adenosyl-L-methionine = 4-amino-2-methyl-5-(phosphooxymethyl)pyrimidine + CO + 5'-deoxyadenosine + formate + L-methionine + 3 H(+). It participates in cofactor biosynthesis; thiamine diphosphate biosynthesis. Its function is as follows. Catalyzes the synthesis of the hydroxymethylpyrimidine phosphate (HMP-P) moiety of thiamine from aminoimidazole ribotide (AIR) in a radical S-adenosyl-L-methionine (SAM)-dependent reaction. The protein is Phosphomethylpyrimidine synthase of Acidovorax sp. (strain JS42).